We begin with the raw amino-acid sequence, 316 residues long: Serpentine receptor class delta-45 (316 aa).

A run of 7 helical transmembrane segments spans residues 8 to 28, 42 to 62, 91 to 111, 128 to 148, 184 to 204, 234 to 254, and 266 to 286; these read VFYPMFFILVIPSLILLIFII, ILLVTCISQIVAVTTNCLIQI, YFLTQTAVVISNVLIFLTIYL, VTFFILSPIFIALGAQTSLIL, IIITFVITGTILILPAVGLLL, LQVFLPLICYIPVFGSFLVLA, and FFSVLVMLPMLFDPYIILYSV.

The protein belongs to the nematode receptor-like protein srd family.

The protein resides in the membrane. The protein is Serpentine receptor class delta-45 (srd-45) of Caenorhabditis elegans.